Reading from the N-terminus, the 456-residue chain is RuvB-like 1 (456 aa).

70–77 (GPPGTGKT) provides a ligand contact to ATP.

Belongs to the RuvB family. Forms homohexameric rings. Can form a dodecamer with ruvbl2 made of two stacked hexameric rings. Is a component of the RNA polymerase II holoenzyme complex. Component of the chromatin-remodeling Ino80 complex. Component of some MLL1/MLL complex.

The protein localises to the nucleus. It localises to the dynein axonemal particle. It catalyses the reaction ATP + H2O = ADP + phosphate + H(+). In terms of biological role, has single-stranded DNA-stimulated ATPase and ATP-dependent DNA helicase (3' to 5') activity suggesting a role in nuclear processes such as recombination and transcription. Proposed core component of the chromatin remodeling INO80 complex which exhibits DNA- and nucleosome-activated ATPase activity and catalyzes ATP-dependent nucleosome sliding. The polypeptide is RuvB-like 1 (ruvbl1) (Xenopus laevis (African clawed frog)).